We begin with the raw amino-acid sequence, 176 residues long: Pituitary adenylate cyclase-activating polypeptide (176 aa).

Residues M1 to C24 form the signal peptide. Positions S25–E80 are excised as a propeptide. Residues V150–L158 form an important for receptor binding region. Leucine amide is present on L158. A Lysine amide modification is found at K169. The propeptide occupies I173 to L176.

Belongs to the glucagon family.

The protein resides in the secreted. Functionally, PACAP is a neuropeptide involved in diverse array of physiological processes through activating the PACAP subfamily of class B1 G protein-coupled receptors: VIP receptor 1 (VIPR1), VIP receptor 2 (VIPR2), and PACAP type I receptor (ADCYAP1R1). Exerts neuroprotective and general cytoprotective effects due to anti-apoptotic, anti-inflammatory, and antioxidant actions. Promotes neuron projection development through the RAPGEF2/Rap1/B-Raf/ERK pathway. In chromaffin cells, induces long-lasting increase of intracellular calcium concentrations and neuroendocrine secretion. Involved in the control of glucose homeostasis, induces insulin secretion by pancreatic beta cells. PACAP exists in two bioactive forms from proteolysis of the same precursor protein, PACAP27 and PACAP38, which differ by eleven amino acid residues in the C-terminus. The protein is Pituitary adenylate cyclase-activating polypeptide (ADCYAP1) of Sus scrofa (Pig).